The sequence spans 236 residues: Small ribosomal subunit protein eS6 (236 aa).

It belongs to the eukaryotic ribosomal protein eS6 family. As to quaternary structure, component of the small ribosomal subunit. Part of the small subunit (SSU) processome, composed of more than 70 proteins and the RNA chaperone small nucleolar RNA (snoRNA) U3. Post-translationally, ribosomal protein S6 is the major substrate of protein kinases in eukaryote ribosomes.

The protein resides in the cytoplasm. It localises to the nucleus. The protein localises to the nucleolus. In terms of biological role, component of the 40S small ribosomal subunit. Plays an important role in controlling cell growth and proliferation through the selective translation of particular classes of mRNA. Part of the small subunit (SSU) processome, first precursor of the small eukaryotic ribosomal subunit. During the assembly of the SSU processome in the nucleolus, many ribosome biogenesis factors, an RNA chaperone and ribosomal proteins associate with the nascent pre-rRNA and work in concert to generate RNA folding, modifications, rearrangements and cleavage as well as targeted degradation of pre-ribosomal RNA by the RNA exosome. The polypeptide is Small ribosomal subunit protein eS6 (rps6) (Dictyostelium discoideum (Social amoeba)).